Consider the following 81-residue polypeptide: Centromere protein X (81 aa).

N-acetylmethionine is present on Met-1.

This sequence belongs to the CENP-X/MHF2 family. Heterodimer with CENPX, sometimes called MHF; this interaction stabilizes both partners. MHF heterodimers can assemble to form tetrameric structures. MHF also coassemble with CENPT-CENPW heterodimers at centromeres to form the tetrameric CENP-T-W-S-X complex. Forms a discrete complex with FANCM and CENPX, called FANCM-MHF; this interaction, probably mediated by direct binding between CENPS and FANCM, leads to synergistic activation of double-stranded DNA binding and strongly stimulates FANCM-mediated DNA remodeling. Recruited by FANCM to the Fanconi anemia (FA) core complex, which consists of CENPS, CENPX, FANCA, FANCB, FANCC, FANCE, FANCF, FANCG, FANCL, FANCM, FAAP24 and FAAP100. The FA core complex associates with Bloom syndrome (BLM) complex, which consists of at least BLM, DNA topoisomerase 3-alpha (TOP3A), RMI1/BLAP75, RPA1/RPA70 and RPA2/RPA32. The super complex between FA and BLM is called BRAFT.

The protein localises to the nucleus. The protein resides in the chromosome. Its subcellular location is the centromere. It is found in the kinetochore. DNA-binding component of the Fanconi anemia (FA) core complex. Required for the normal activation of the FA pathway, leading to monoubiquitination of the FANCI-FANCD2 complex in response to DNA damage, cellular resistance to DNA cross-linking drugs, and prevention of chromosomal breakage. In complex with CENPS (MHF heterodimer), crucial cofactor for FANCM in both binding and ATP-dependent remodeling of DNA. Stabilizes FANCM. In complex with CENPS and FANCM (but not other FANC proteins), rapidly recruited to blocked forks and promotes gene conversion at blocked replication forks. In complex with CENPS, CENPT and CENPW (CENP-T-W-S-X heterotetramer), involved in the formation of a functional kinetochore outer plate, which is essential for kinetochore-microtubule attachment and faithful mitotic progression. As a component of MHF and CENP-T-W-S-X complexes, binds DNA and bends it to form a nucleosome-like structure. DNA-binding function is fulfilled in the presence of CENPS, with the following preference for DNA substates: Holliday junction &gt; double-stranded &gt; splay arm &gt; single-stranded. Does not bind DNA on its own. This Pongo abelii (Sumatran orangutan) protein is Centromere protein X (CENPX).